The following is a 258-amino-acid chain: Adenosylcobinamide-GDP ribazoletransferase (258 aa).

A run of 6 helical transmembrane segments spans residues 41 to 61, 65 to 85, 115 to 135, 136 to 156, 197 to 217, and 236 to 256; these read FFPL…WLAS, PAPG…TGAF, IGAF…QLLM, AMAA…HAAS, LPLL…LLAA, and CLGL…LAWT.

Belongs to the CobS family. The cofactor is Mg(2+).

Its subcellular location is the cell inner membrane. The catalysed reaction is alpha-ribazole + adenosylcob(III)inamide-GDP = adenosylcob(III)alamin + GMP + H(+). The enzyme catalyses alpha-ribazole 5'-phosphate + adenosylcob(III)inamide-GDP = adenosylcob(III)alamin 5'-phosphate + GMP + H(+). It functions in the pathway cofactor biosynthesis; adenosylcobalamin biosynthesis; adenosylcobalamin from cob(II)yrinate a,c-diamide: step 7/7. Joins adenosylcobinamide-GDP and alpha-ribazole to generate adenosylcobalamin (Ado-cobalamin). Also synthesizes adenosylcobalamin 5'-phosphate from adenosylcobinamide-GDP and alpha-ribazole 5'-phosphate. This Ralstonia nicotianae (strain ATCC BAA-1114 / GMI1000) (Ralstonia solanacearum) protein is Adenosylcobinamide-GDP ribazoletransferase.